The primary structure comprises 344 residues: Dihydroorotase (344 aa).

Positions 14 and 16 each coordinate Zn(2+). Substrate-binding positions include 16–18 (HLR) and Asn-42. Positions 100, 137, and 175 each coordinate Zn(2+). Residue Lys-100 is modified to N6-carboxylysine. Substrate is bound at residue His-137. A substrate-binding site is contributed by Leu-220. Residue Asp-248 participates in Zn(2+) binding. Asp-248 is a catalytic residue. Substrate is bound by residues His-252 and Ala-264.

This sequence belongs to the metallo-dependent hydrolases superfamily. DHOase family. Class II DHOase subfamily. Homodimer. It depends on Zn(2+) as a cofactor.

The catalysed reaction is (S)-dihydroorotate + H2O = N-carbamoyl-L-aspartate + H(+). The protein operates within pyrimidine metabolism; UMP biosynthesis via de novo pathway; (S)-dihydroorotate from bicarbonate: step 3/3. Functionally, catalyzes the reversible cyclization of carbamoyl aspartate to dihydroorotate. The protein is Dihydroorotase of Ralstonia nicotianae (strain ATCC BAA-1114 / GMI1000) (Ralstonia solanacearum).